We begin with the raw amino-acid sequence, 585 residues long: Pentatricopeptide repeat-containing protein At4g21170 (585 aa).

PPR repeat units follow at residues 152-186, 187-221, 222-247, 252-286, 287-321, 324-358, 360-394, 396-431, 432-466, 467-501, 502-534, and 538-572; these read LSVS…RLSP, SQSA…GIVS, DELT…KLME, SCKI…KLEL, SFCS…KFVT, DSAV…ETVR, WDST…GITV, DESC…GFVP, CTHK…EVYF, DSFA…KGSL, DVNA…MKEI, and NSKS…GLKP.

It belongs to the PPR family. P subfamily.

The chain is Pentatricopeptide repeat-containing protein At4g21170 from Arabidopsis thaliana (Mouse-ear cress).